The primary structure comprises 159 residues: Ribosomal RNA large subunit methyltransferase H (159 aa).

Residues L76, G108, and 127–132 (FSKMTF) each bind S-adenosyl-L-methionine.

It belongs to the RNA methyltransferase RlmH family. Homodimer.

It localises to the cytoplasm. It catalyses the reaction pseudouridine(1915) in 23S rRNA + S-adenosyl-L-methionine = N(3)-methylpseudouridine(1915) in 23S rRNA + S-adenosyl-L-homocysteine + H(+). Its function is as follows. Specifically methylates the pseudouridine at position 1915 (m3Psi1915) in 23S rRNA. The protein is Ribosomal RNA large subunit methyltransferase H of Bacillus velezensis (strain DSM 23117 / BGSC 10A6 / LMG 26770 / FZB42) (Bacillus amyloliquefaciens subsp. plantarum).